A 453-amino-acid chain; its full sequence is Probable multidrug resistance protein NorM (453 aa).

Helical transmembrane passes span 13–35, 50–72, 93–115, 125–147, 160–182, 192–214, 238–260, 275–297, 318–340, 350–372, 385–407, and 417–439; these read LLFFSFPIIVSQIARTAMSFVDI, TLGSSIWFPIFVLGYGTIIMLAA, YLFLAVILSIPIIILLMLVSWLL, LEITQGYVIALACGVPSVMIFNV, IAMYLSAGALLLNIPLNYILIYG, IGAGITTAIINNLIAVCLIIYFL, FYIGMPSGLALFVEMVFLDVIAI, IMLNITSIIYTITGGIAAAVTVR, IALILSISAVIGVLIYYFAGSFI, IIIALNIIFLLCLFQFFDSCQAA, SVFYAPLFGYWLVGLPLGFILAL, and IIGFWYGLVLGLFVNAILLFIIL.

It belongs to the multi antimicrobial extrusion (MATE) (TC 2.A.66.1) family.

The protein resides in the cell inner membrane. Functionally, multidrug efflux pump. In Photorhabdus laumondii subsp. laumondii (strain DSM 15139 / CIP 105565 / TT01) (Photorhabdus luminescens subsp. laumondii), this protein is Probable multidrug resistance protein NorM (norM).